The sequence spans 316 residues: MIYILGTGGNMPTKYRQTLSIFVNYMGKGILFDAGENTQRQMRLLNLSPTQIDYIFLTHIHGDHILGLPGILLSLSNQDYNRELTIFGPKGIKEVIEKIIDSFAININFPLKIKEIGETKIDFGPFYIESIYGIHQVPVLAYSFKEKDKIKINKEKLAKYNIRSNPKLAKLKEGKSVTINGITLDPKEFTYIQKGLKFTLITDTLFREQFIDFARDSDIIFHELAFLDKDKDKAIEHYHSTISDAFRIRDESNSKLLVFIHVSPRYQGSLFEIYQYLYNKKDWIIAEDLDYIEYKKGTIIYKRNDIVLYEYAIWRS.

Zn(2+) contacts are provided by histidine 59, histidine 61, aspartate 63, histidine 64, histidine 135, aspartate 203, and histidine 261. The active-site Proton acceptor is the aspartate 63.

This sequence belongs to the RNase Z family. Homodimer. Zn(2+) is required as a cofactor.

It carries out the reaction Endonucleolytic cleavage of RNA, removing extra 3' nucleotides from tRNA precursor, generating 3' termini of tRNAs. A 3'-hydroxy group is left at the tRNA terminus and a 5'-phosphoryl group is left at the trailer molecule.. Functionally, zinc phosphodiesterase, which displays some tRNA 3'-processing endonuclease activity. Probably involved in tRNA maturation, by removing a 3'-trailer from precursor tRNA. In Nanoarchaeum equitans (strain Kin4-M), this protein is Ribonuclease Z.